We begin with the raw amino-acid sequence, 721 residues long: MIYEGKAITVKALESGIVELNFDLKGESVNKFNRLTLNEFRQAVDAVKADASVKGVIVTSGKDSFIVGADITEFVDNFKLPEAELVAGNLEANRIFSDFEDLNVPTVVAINGIALGGGLEMCLAADYRVMASSARIGLPEVKLGLYPGFGGTVRLPRIIGADNAIEWIASGKENAAEDALKVGAVDAVVAPEKLQAAALDLIQRAISGEFDYKAKRQPKLDKLKLNAIEQMMAFETAKGFVAGQAGPNYPAPVEAIKTIQKAANFGRDKALEIEAAGFVKMAKTPAAQSLIGLFLNDQELKKKARGYDKIAKDVKQAAVLGAGIMGGGIAYQSAVKGTPILMKDIREEAIQLGLNEASKLLGGRLEKGRLTAAKMAEALNAIRPTLSYGDFGNVDLVVEAVVENPKVKQAVLAEVEANVGENTILASNTSTISISLLAQALKRPENFVGMHFFNPVHMMPLVEVIRGEKSSEEAVATTVAYAKKMGKNPIVVNDCPGFLVNRVLFPYFGGFARLVSAGVDFVRIDKVMEKFGWPMGPAYLMDVVGIDTGHHGRDVMAEGFPDRMKDDRRSAIDALYDAKRLGQKNGKGFYAYETDKKGKPKKVNDPAVLDVLKPIVYEQREVSDEDIVNWMMIPLCLETVRCLEDGIVETAAEADMGLIYGIGFPPFRGGALRYIDSIGVAEFVALADQYAELGALYQPTAKLREMAANGQSFFGQASSEE.

Residues 1–190 are enoyl-CoA hydratase/isomerase; it reads MIYEGKAITV…KVGAVDAVVA (190 aa). Aspartate 297 provides a ligand contact to substrate. The segment at 312–721 is 3-hydroxyacyl-CoA dehydrogenase; it reads KDVKQAAVLG…SFFGQASSEE (410 aa). NAD(+) contacts are provided by residues methionine 325, aspartate 344, 401-403, lysine 408, and serine 430; that span reads VVE. Histidine 451 serves as the catalytic For 3-hydroxyacyl-CoA dehydrogenase activity. Asparagine 454 serves as a coordination point for NAD(+). Asparagine 501 and tyrosine 660 together coordinate substrate.

The protein in the N-terminal section; belongs to the enoyl-CoA hydratase/isomerase family. This sequence in the C-terminal section; belongs to the 3-hydroxyacyl-CoA dehydrogenase family. As to quaternary structure, heterotetramer of two alpha chains (FadB) and two beta chains (FadA).

The catalysed reaction is a (3S)-3-hydroxyacyl-CoA + NAD(+) = a 3-oxoacyl-CoA + NADH + H(+). It catalyses the reaction a (3S)-3-hydroxyacyl-CoA = a (2E)-enoyl-CoA + H2O. It carries out the reaction a 4-saturated-(3S)-3-hydroxyacyl-CoA = a (3E)-enoyl-CoA + H2O. The enzyme catalyses (3S)-3-hydroxybutanoyl-CoA = (3R)-3-hydroxybutanoyl-CoA. The catalysed reaction is a (3Z)-enoyl-CoA = a 4-saturated (2E)-enoyl-CoA. It catalyses the reaction a (3E)-enoyl-CoA = a 4-saturated (2E)-enoyl-CoA. The protein operates within lipid metabolism; fatty acid beta-oxidation. Involved in the aerobic and anaerobic degradation of long-chain fatty acids via beta-oxidation cycle. Catalyzes the formation of 3-oxoacyl-CoA from enoyl-CoA via L-3-hydroxyacyl-CoA. It can also use D-3-hydroxyacyl-CoA and cis-3-enoyl-CoA as substrate. This Pseudomonas syringae pv. syringae (strain B728a) protein is Fatty acid oxidation complex subunit alpha.